We begin with the raw amino-acid sequence, 488 residues long: Envelope glycoprotein gp62 (488 aa).

An N-terminal signal peptide occupies residues 1–20 (MGKFLATLILFFQFCPLILS). The Extracellular segment spans residues 21-442 (DYSPSCCTLT…LGLSQWAREA (422 aa)). Residues N140 and N222 are each glycosylated (N-linked (GlcNAc...) asparagine; by host). The CXXC signature appears at 225 to 228 (CIVC). Disulfide bonds link C225/C228, C225/C401, and C393/C400. N244 and N272 each carry an N-linked (GlcNAc...) asparagine; by host glycan. Positions 313-333 (AVPVAVWLVSALAMGAGMAGG) are fusion peptide. 2 coiled-coil regions span residues 341–387 (ASGR…LLFW) and 397–429 (QEQC…GWGL). The tract at residues 376–392 (AQNRRGLDLLFWEQGGL) is immunosuppression. Residues 393-401 (CKALQEQCC) carry the CX6CC motif. Residue N404 is glycosylated (N-linked (GlcNAc...) asparagine; by host). A helical transmembrane segment spans residues 443–463 (LQTGITLVALLLLVILAGPCI). C462 is lipidated: S-palmitoyl cysteine; by host. Over 464–488 (LRQLRHLPSRVRYPHYSLINPESSL) the chain is Cytoplasmic.

In terms of assembly, the mature envelope protein (Env) consists of a trimer of SU-TM heterodimers attached by a labile interchain disulfide bond. In terms of processing, specific enzymatic cleavages in vivo yield mature proteins. Envelope glycoproteins are synthesized as an inactive precursor that is N-glycosylated and processed likely by host cell furin or by a furin-like protease in the Golgi to yield the mature SU and TM proteins. The cleavage site between SU and TM requires the minimal sequence [KR]-X-[KR]-R. Post-translationally, the CXXC motif is highly conserved across a broad range of retroviral envelope proteins. It is thought to participate in the formation of a labile disulfide bond possibly with the CX6CC motif present in the transmembrane protein. Isomerization of the intersubunit disulfide bond to an SU intrachain disulfide bond is thought to occur upon receptor recognition in order to allow membrane fusion. The transmembrane protein is palmitoylated.

Its subcellular location is the virion membrane. It localises to the host cell membrane. Functionally, the surface protein (SU) attaches the virus to the host cell by binding to its receptor. This interaction triggers the refolding of the transmembrane protein (TM) and is thought to activate its fusogenic potential by unmasking its fusion peptide. Fusion occurs at the host cell plasma membrane. The transmembrane protein (TM) acts as a class I viral fusion protein. Under the current model, the protein has at least 3 conformational states: pre-fusion native state, pre-hairpin intermediate state, and post-fusion hairpin state. During viral and target cell membrane fusion, the coiled coil regions (heptad repeats) assume a trimer-of-hairpins structure, positioning the fusion peptide in close proximity to the C-terminal region of the ectodomain. The formation of this structure appears to drive apposition and subsequent fusion of viral and target cell membranes. Membranes fusion leads to delivery of the nucleocapsid into the cytoplasm. This is Envelope glycoprotein gp62 (env) from Human T-cell leukemia virus 1 (isolate Zaire EL subtype B) (HTLV-1).